The chain runs to 771 residues: Dol-P-Glc:Glc(2)Man(9)GlcNAc(2)-PP-Dol alpha-1,2-glucosyltransferase (771 aa).

7 helical membrane passes run 45 to 65 (FITA…LALV), 160 to 180 (VSFY…IFFF), 182 to 202 (GLYY…WNHL), 221 to 241 (VVLG…VVVY), 293 to 313 (VDMA…IAAL), 326 to 346 (HITI…VVLG), and 357 to 377 (LPQM…LLIP). Positions 392-449 (TPTPSHTTTKDPGRSSWRFTKPSITSKKSSTTKPPQRSGPTPASSSSSSSSFSPDTNS) are disordered. Low complexity-rich tracts occupy residues 411–426 (TKPS…TKPP) and 435–449 (SSSS…DTNS). N-linked (GlcNAc...) asparagine glycosylation occurs at Asn448. A run of 2 helical transmembrane segments spans residues 469–489 (PFYL…NTII) and 503–525 (YIFR…AYTL). Positions 584 to 593 (QKNIKDKQKE) are enriched in basic and acidic residues. The segment at 584-605 (QKNIKDKQKEVEEEEEEEEKED) is disordered. A compositionally biased stretch (acidic residues) spans 594–604 (VEEEEEEEEKE). The next 2 helical transmembrane spans lie at 631–651 (TSTV…APLV) and 656–676 (FILP…SSSL). The segment at 682 to 708 (SSSFASSTTESGNGDGNDAATAARQQQ) is disordered. The chain crosses the membrane as a helical span at residues 728-748 (LALETVWFLAINIGTMYMFLF).

This sequence belongs to the ALG10 glucosyltransferase family.

Its subcellular location is the endoplasmic reticulum membrane. The catalysed reaction is an alpha-D-Glc-(1-&gt;3)-alpha-D-Glc-(1-&gt;3)-alpha-D-Man-(1-&gt;2)-alpha-D-Man-(1-&gt;2)-alpha-D-Man-(1-&gt;3)-[alpha-D-Man-(1-&gt;2)-alpha-D-Man-(1-&gt;3)-[alpha-D-Man-(1-&gt;2)-alpha-D-Man-(1-&gt;6)]-alpha-D-Man-(1-&gt;6)]-beta-D-Man-(1-&gt;4)-beta-D-GlcNAc-(1-&gt;4)-alpha-D-GlcNAc-diphospho-di-trans,poly-cis-dolichol + a di-trans,poly-cis-dolichyl beta-D-glucosyl phosphate = a alpha-D-Glc-(1-&gt;2)-alpha-D-Glc-(1-&gt;3)-alpha-D-Glc-(1-&gt;3)-alpha-D-Man-(1-&gt;2)-alpha-D-Man-(1-&gt;2)-alpha-D-Man-(1-&gt;3)-[alpha-D-Man-(1-&gt;2)-alpha-D-Man-(1-&gt;3)-[alpha-D-Man-(1-&gt;2)-alpha-D-Man-(1-&gt;6)]-alpha-D-Man-(1-&gt;6)]-beta-D-Man-(1-&gt;4)-beta-D-GlcNAc-(1-&gt;4)-alpha-D-GlcNAc-diphospho-di-trans,poly-cis-dolichol + a di-trans,poly-cis-dolichyl phosphate + H(+). It participates in protein modification; protein glycosylation. In terms of biological role, dol-P-Glc:Glc(2)Man(9)GlcNAc(2)-PP-Dol alpha-1,2-glucosyltransferase that operates in the biosynthetic pathway of dolichol-linked oligosaccharides, the glycan precursors employed in protein asparagine (N)-glycosylation. The assembly of dolichol-linked oligosaccharides begins on the cytosolic side of the endoplasmic reticulum membrane and finishes in its lumen. The sequential addition of sugars to dolichol pyrophosphate produces dolichol-linked oligosaccharides containing fourteen sugars, including two GlcNAcs, nine mannoses and three glucoses. Once assembled, the oligosaccharide is transferred from the lipid to nascent proteins by oligosaccharyltransferases. In the lumen of the endoplasmic reticulum, adds the third and last glucose residue from dolichyl phosphate glucose (Dol-P-Glc) onto the lipid-linked oligosaccharide intermediate Glc(2)Man(9)GlcNAc(2)-PP-Dol to produce Glc(3)Man(9)GlcNAc(2)-PP-Dol. In Neurospora crassa (strain ATCC 24698 / 74-OR23-1A / CBS 708.71 / DSM 1257 / FGSC 987), this protein is Dol-P-Glc:Glc(2)Man(9)GlcNAc(2)-PP-Dol alpha-1,2-glucosyltransferase (alg-10).